Here is an 89-residue protein sequence, read N- to C-terminus: Probable spanin, outer lipoprotein subunit (89 aa).

Residues 1-10 (MPPCSATSRR) show a composition bias toward polar residues. A disordered region spans residues 1–21 (MPPCSATSRRSLPGPTPSARR). Positions 1 to 47 (MPPCSATSRRSLPGPTPSARRWTVPWTRTARGLTGLCLLLSLTACAT) are cleaved as a signal peptide.

In terms of assembly, interacts (via C-terminus) with the spanin inner membrane subunit (via C-terminus). Part of the spanin complex which spans the entire periplasmic space. The spanin complex is composed of spanin inner membrane subunit and spanin outer membrane subunit.

The protein resides in the host cell outer membrane. Component of the spanin complex that disrupts the host outer membrane and participates in cell lysis during virus exit. The spanin complex conducts the final step in host lysis by disrupting the outer membrane after holin and endolysin action have permeabilized the inner membrane and degraded the host peptidoglycans. Host outer membrane disruption is possibly due to local fusion between the inner and outer membrane performed by the spanin complex. This Pseudomonas aeruginosa protein is Probable spanin, outer lipoprotein subunit.